The sequence spans 318 residues: Pantothenate kinase (318 aa).

96–103 (GSVAVGKS) contributes to the ATP binding site.

Belongs to the prokaryotic pantothenate kinase family.

The protein localises to the cytoplasm. It catalyses the reaction (R)-pantothenate + ATP = (R)-4'-phosphopantothenate + ADP + H(+). Its pathway is cofactor biosynthesis; coenzyme A biosynthesis; CoA from (R)-pantothenate: step 1/5. The sequence is that of Pantothenate kinase from Nitrobacter hamburgensis (strain DSM 10229 / NCIMB 13809 / X14).